Here is a 251-residue protein sequence, read N- to C-terminus: MTKTEKKLRHYITKAIADYKLLDKGDKVMLCLSGGKDSFGLLKVLHGLIEDKTYDIDLHVYTLDQSQPGWDDSQLRKYLDDLGVSYEIETKNTYGVIIDKVPEGKTYCSLCSRLRRGNIYRYAKEHKMDKIILGHHRDDLIQSLLMSILYQGQIKSMPPKFVTQDGENTVIRPMVLVQERDLIEFAKEENFPIIPCNLCGSQENLKRKKVKKLIQDLALENPKVPSNILNSLSNVLPSHLMDKNLLNSLEN.

Positions 33 to 38 match the PP-loop motif motif; that stretch reads SGGKDS. The [4Fe-4S] cluster site is built by cysteine 108, cysteine 111, and cysteine 199.

Belongs to the TtcA family. Homodimer. Mg(2+) serves as cofactor. It depends on [4Fe-4S] cluster as a cofactor.

It is found in the cytoplasm. The enzyme catalyses cytidine(32) in tRNA + S-sulfanyl-L-cysteinyl-[cysteine desulfurase] + AH2 + ATP = 2-thiocytidine(32) in tRNA + L-cysteinyl-[cysteine desulfurase] + A + AMP + diphosphate + H(+). It functions in the pathway tRNA modification. Catalyzes the ATP-dependent 2-thiolation of cytidine in position 32 of tRNA, to form 2-thiocytidine (s(2)C32). The sulfur atoms are provided by the cysteine/cysteine desulfurase (IscS) system. In Francisella tularensis subsp. tularensis (strain FSC 198), this protein is tRNA-cytidine(32) 2-sulfurtransferase 2.